The sequence spans 295 residues: Tyrosine recombinase XerC (295 aa).

In terms of domain architecture, Core-binding (CB) spans 1 to 85 (MLTALNRYWD…ALRRFLSFLV (85 aa)). Positions 106 to 285 (HLPKNMDGEQ…NFQHLAEVYD (180 aa)) constitute a Tyr recombinase domain. Residues R145, K169, H237, R240, and H263 contribute to the active site. The O-(3'-phospho-DNA)-tyrosine intermediate role is filled by Y272.

Belongs to the 'phage' integrase family. XerC subfamily. In terms of assembly, forms a cyclic heterotetrameric complex composed of two molecules of XerC and two molecules of XerD.

Its subcellular location is the cytoplasm. Its function is as follows. Site-specific tyrosine recombinase, which acts by catalyzing the cutting and rejoining of the recombining DNA molecules. The XerC-XerD complex is essential to convert dimers of the bacterial chromosome into monomers to permit their segregation at cell division. It also contributes to the segregational stability of plasmids. The polypeptide is Tyrosine recombinase XerC (Haemophilus influenzae (strain PittEE)).